A 273-amino-acid polypeptide reads, in one-letter code: 4-hydroxy-tetrahydrodipicolinate reductase (273 aa).

Residue 12 to 17 participates in NAD(+) binding; it reads GANGRM. Arginine 39 is a binding site for NADP(+). Residues 102 to 104 and 126 to 129 each bind NAD(+); these read GTT and AANF. Histidine 159 (proton donor/acceptor) is an active-site residue. Residue histidine 160 coordinates (S)-2,3,4,5-tetrahydrodipicolinate. The active-site Proton donor is lysine 163. Position 169–170 (169–170) interacts with (S)-2,3,4,5-tetrahydrodipicolinate; the sequence is GT.

The protein belongs to the DapB family. In terms of assembly, homotetramer.

The protein localises to the cytoplasm. The enzyme catalyses (S)-2,3,4,5-tetrahydrodipicolinate + NAD(+) + H2O = (2S,4S)-4-hydroxy-2,3,4,5-tetrahydrodipicolinate + NADH + H(+). The catalysed reaction is (S)-2,3,4,5-tetrahydrodipicolinate + NADP(+) + H2O = (2S,4S)-4-hydroxy-2,3,4,5-tetrahydrodipicolinate + NADPH + H(+). Its pathway is amino-acid biosynthesis; L-lysine biosynthesis via DAP pathway; (S)-tetrahydrodipicolinate from L-aspartate: step 4/4. Functionally, catalyzes the conversion of 4-hydroxy-tetrahydrodipicolinate (HTPA) to tetrahydrodipicolinate. The protein is 4-hydroxy-tetrahydrodipicolinate reductase of Cronobacter sakazakii (strain ATCC BAA-894) (Enterobacter sakazakii).